A 153-amino-acid chain; its full sequence is Calmodulin-like protein 3 (153 aa).

4 EF-hand domains span residues 1 to 36, 37 to 72, 74 to 109, and 112 to 147; these read MDQAELARIFQMFDRNGDGKITKQELNDSLENLGIY, IPDKDLVQMIEKIDLNGDGYVDIEEFGGLYQTIMEE, DEEEDMREAFNVFDQNRDGFITVEELRSVLASLGLK, and RTLEDCKRMISKVDVDGDGMVNFKEFKQMMKGGGFA. Ca(2+)-binding residues include aspartate 14, asparagine 16, aspartate 18, lysine 20, glutamate 25, aspartate 50, asparagine 52, aspartate 54, tyrosine 56, glutamate 61, aspartate 87, asparagine 89, aspartate 91, glutamate 98, aspartate 125, aspartate 127, aspartate 129, methionine 131, and glutamate 136.

The protein belongs to the calmodulin family.

Functionally, potential calcium sensor. The protein is Calmodulin-like protein 3 (CML3) of Arabidopsis thaliana (Mouse-ear cress).